Here is a 549-residue protein sequence, read N- to C-terminus: Glucose-6-phosphate isomerase (549 aa).

Glu-355 serves as the catalytic Proton donor. Active-site residues include His-387 and Lys-515.

This sequence belongs to the GPI family.

Its subcellular location is the cytoplasm. The enzyme catalyses alpha-D-glucose 6-phosphate = beta-D-fructose 6-phosphate. It functions in the pathway carbohydrate biosynthesis; gluconeogenesis. The protein operates within carbohydrate degradation; glycolysis; D-glyceraldehyde 3-phosphate and glycerone phosphate from D-glucose: step 2/4. Catalyzes the reversible isomerization of glucose-6-phosphate to fructose-6-phosphate. This chain is Glucose-6-phosphate isomerase, found in Histophilus somni (strain 129Pt) (Haemophilus somnus).